The primary structure comprises 146 residues: Ribonuclease H (146 aa).

One can recognise an RNase H type-1 domain in the interval Met1–Lys143. Residues Asp10, Glu48, Asp70, and Asp135 each contribute to the Mg(2+) site.

The protein belongs to the RNase H family. Monomer. Requires Mg(2+) as cofactor.

It is found in the cytoplasm. The catalysed reaction is Endonucleolytic cleavage to 5'-phosphomonoester.. Functionally, endonuclease that specifically degrades the RNA of RNA-DNA hybrids. The chain is Ribonuclease H from Chlorobium chlorochromatii (strain CaD3).